The chain runs to 345 residues: Nuclear egress protein 1 (345 aa).

The CCCH-type zinc finger occupies 115–247; sequence CISLSEMGYT…FVFKPGSPLH (133 aa).

The protein belongs to the herpesviridae NEC1 protein family. In terms of assembly, forms a heterohexameric complex with NEC2. Interacts with capsid vertex specific component 2/CVC2; this interaction directs the capsid to the host inner nuclear membrane to initiate budding. Phosphorylated at serine residues in the N-terminus. This phosphorylation regulates the localization within the inner nuclear membrane.

Its subcellular location is the host nucleus inner membrane. Functionally, plays an essential role in virion nuclear egress, the first step of virion release from infected cell. Within the host nucleus, NEC1 interacts with the newly formed capsid through the vertexes and directs it to the inner nuclear membrane by associating with NEC2. Induces the budding of the capsid at the inner nuclear membrane as well as its envelopment into the perinuclear space. There, the NEC1/NEC2 complex promotes the fusion of the enveloped capsid with the outer nuclear membrane and the subsequent release of the viral capsid into the cytoplasm where it will reach the secondary budding sites in the host Golgi or trans-Golgi network. In Psittacid herpesvirus 1 (isolate Amazon parrot/-/97-0001/1997) (PsHV-1), this protein is Nuclear egress protein 1.